The chain runs to 469 residues: Ribulose bisphosphate carboxylase large chain (469 aa).

The residue at position 7 (Lys7) is an N6,N6,N6-trimethyllysine. Positions 116 and 166 each coordinate substrate. The active-site Proton acceptor is the Lys168. Substrate is bound at residue Lys170. Positions 194, 196, and 197 each coordinate Mg(2+). Lys194 bears the N6-carboxylysine mark. His287 serves as the catalytic Proton acceptor. Substrate-binding residues include Arg288, His320, and Ser372.

Belongs to the RuBisCO large chain family. Type I subfamily. Heterohexadecamer of 8 large chains and 8 small chains; disulfide-linked. The disulfide link is formed within the large subunit homodimers. Requires Mg(2+) as cofactor. In terms of processing, the disulfide bond which can form in the large chain dimeric partners within the hexadecamer appears to be associated with oxidative stress and protein turnover.

The protein resides in the plastid. The protein localises to the chloroplast. The catalysed reaction is 2 (2R)-3-phosphoglycerate + 2 H(+) = D-ribulose 1,5-bisphosphate + CO2 + H2O. It carries out the reaction D-ribulose 1,5-bisphosphate + O2 = 2-phosphoglycolate + (2R)-3-phosphoglycerate + 2 H(+). RuBisCO catalyzes two reactions: the carboxylation of D-ribulose 1,5-bisphosphate, the primary event in carbon dioxide fixation, as well as the oxidative fragmentation of the pentose substrate in the photorespiration process. Both reactions occur simultaneously and in competition at the same active site. This chain is Ribulose bisphosphate carboxylase large chain, found in Pachira aquatica (Guiana chestnut).